Here is a 1885-residue protein sequence, read N- to C-terminus: RNA-directed RNA polymerase (1885 aa).

The region spanning 63 to 239 (SPFAYVNHSH…GFLLSSSSIL (177 aa)) is the Alphavirus-like MT domain. Residues 607-635 (QKEKNLGQEASKGKGIEQEERRKSDEAKF) are compositionally biased toward basic and acidic residues. The disordered stretch occupies residues 607–639 (QKEKNLGQEASKGKGIEQEERRKSDEAKFDSGP). The 89-residue stretch at 748 to 836 (NFNSALIQVY…RTSVTLRVHK (89 aa)) folds into the Fe2OG dioxygenase domain. The (+)RNA virus helicase ATP-binding domain maps to 1027 to 1192 (MSMIKGKSEE…RLFKDGVNYK (166 aa)). Position 1060-1067 (1060-1067 (GFAGSGKS)) interacts with ATP. The (+)RNA virus helicase C-terminal domain maps to 1193-1337 (WYSYRINKFI…CSGIGASKEF (145 aa)). Residues 1634 to 1741 (SMCVESDYTA…LRNLREIDTH (108 aa)) form the RdRp catalytic domain.

The catalysed reaction is RNA(n) + a ribonucleoside 5'-triphosphate = RNA(n+1) + diphosphate. Functionally, involved in viral RNA replication. In Crataegus (hawthorn), this protein is RNA-directed RNA polymerase.